Consider the following 291-residue polypeptide: N-acetylmannosamine kinase (291 aa).

Residues 5 to 12 (AIDIGGTK) and 132 to 139 (GVGGGVVS) each bind ATP. The Zn(2+) site is built by His-156, Cys-166, Cys-168, and Cys-173.

It belongs to the ROK (NagC/XylR) family. NanK subfamily. Homodimer.

It carries out the reaction an N-acyl-D-mannosamine + ATP = an N-acyl-D-mannosamine 6-phosphate + ADP + H(+). It participates in amino-sugar metabolism; N-acetylneuraminate degradation; D-fructose 6-phosphate from N-acetylneuraminate: step 2/5. Catalyzes the phosphorylation of N-acetylmannosamine (ManNAc) to ManNAc-6-P. In Escherichia coli O9:H4 (strain HS), this protein is N-acetylmannosamine kinase.